A 450-amino-acid chain; its full sequence is Tubulin alpha chain (450 aa).

The GTP site is built by glutamine 11, glutamate 71, serine 140, glycine 144, threonine 145, threonine 179, asparagine 206, and asparagine 228. Glutamate 71 is a Mg(2+) binding site. Residue glutamate 254 is part of the active site.

This sequence belongs to the tubulin family. In terms of assembly, dimer of alpha and beta chains. A typical microtubule is a hollow water-filled tube with an outer diameter of 25 nm and an inner diameter of 15 nM. Alpha-beta heterodimers associate head-to-tail to form protofilaments running lengthwise along the microtubule wall with the beta-tubulin subunit facing the microtubule plus end conferring a structural polarity. Microtubules usually have 13 protofilaments but different protofilament numbers can be found in some organisms and specialized cells. It depends on Mg(2+) as a cofactor.

Its subcellular location is the cytoplasm. The protein localises to the cytoskeleton. The catalysed reaction is GTP + H2O = GDP + phosphate + H(+). Functionally, tubulin is the major constituent of microtubules, a cylinder consisting of laterally associated linear protofilaments composed of alpha- and beta-tubulin heterodimers. Microtubules grow by the addition of GTP-tubulin dimers to the microtubule end, where a stabilizing cap forms. Below the cap, tubulin dimers are in GDP-bound state, owing to GTPase activity of alpha-tubulin. The polypeptide is Tubulin alpha chain (Zymoseptoria tritici (Speckled leaf blotch fungus)).